The following is a 443-amino-acid chain: Signal recognition particle 54 kDa protein (443 aa).

Residues 107 to 114 (GVQGSGKT), 189 to 193 (DTAGR), and 247 to 250 (TKLD) each bind GTP.

This sequence belongs to the GTP-binding SRP family. SRP54 subfamily. As to quaternary structure, part of the signal recognition particle protein translocation system, which is composed of SRP and FtsY. Archaeal SRP consists of a 7S RNA molecule of 300 nucleotides and two protein subunits: SRP54 and SRP19.

It localises to the cytoplasm. The catalysed reaction is GTP + H2O = GDP + phosphate + H(+). Functionally, involved in targeting and insertion of nascent membrane proteins into the cytoplasmic membrane. Binds to the hydrophobic signal sequence of the ribosome-nascent chain (RNC) as it emerges from the ribosomes. The SRP-RNC complex is then targeted to the cytoplasmic membrane where it interacts with the SRP receptor FtsY. The protein is Signal recognition particle 54 kDa protein of Pyrococcus abyssi (strain GE5 / Orsay).